A 1097-amino-acid chain; its full sequence is Leukemia inhibitory factor receptor (1097 aa).

Positions 1-44 (MMDIYVCLKRPSWMVDNKRMRTASNFQWLLSTFILLYLMNQVNS) are cleaved as a signal peptide. Residues 45 to 833 (QKKGAPHDLK…SMYVVTKENS (789 aa)) are Extracellular-facing. The region spanning 49–138 (APHDLKCVTN…EQNVSLIPDT (90 aa)) is the Fibronectin type-III 1 domain. 2 disulfide bridges follow: Cys-55/Cys-65 and Cys-82/Cys-90. N-linked (GlcNAc...) asparagine glycans are attached at residues Asn-64, Asn-85, Asn-131, Asn-143, Asn-191, Asn-243, and Asn-303. A disulfide bridge links Cys-213 with Cys-270. Fibronectin type-III domains lie at 335 to 434 (TPQQ…VYPH), 435 to 534 (TPTS…TEAS), 538 to 629 (GPDT…IPND), 627 to 719 (PNDD…IGYI), and 724 to 833 (PIVA…KENS). Residues Cys-341 and Cys-351 are joined by a disulfide bond. Residues Asn-390, Asn-407, Asn-426, Asn-445, Asn-481, and Asn-489 are each glycosylated (N-linked (GlcNAc...) asparagine). Residues Cys-466 and Cys-511 are joined by a disulfide bond. The WSXWS motif motif lies at 519-523 (WSKWS). N-linked (GlcNAc...) asparagine glycosylation is found at Asn-572, Asn-652, Asn-663, Asn-680, Asn-729, and Asn-787. A helical transmembrane segment spans residues 834–858 (VGLIIAILIPVAVAVIVGVVTSILC). At 859–1097 (YRKREWIKET…TNFFQNKPND (239 aa)) the chain is on the cytoplasmic side. The short motif at 869-877 (FYPDIPNPE) is the Box 1 motif element. Phosphoserine is present on Ser-927. Positions 983-1005 (PQAKPEEEQENDPVGGAGYKPQM) are disordered. Ser-1044 carries the post-translational modification Phosphoserine. The disordered stretch occupies residues 1066–1097 (RQFLIPPKDEDSPKSNGGGWSFTNFFQNKPND). A compositionally biased stretch (polar residues) spans 1086–1097 (SFTNFFQNKPND).

It belongs to the type I cytokine receptor family. Type 2 subfamily. In terms of assembly, heterodimer composed of LIFR and IL6ST. The heterodimer formed by LIFR and IL6ST interacts with the complex formed by CNTF and CNTFR.

Its subcellular location is the cell membrane. The protein localises to the secreted. Its function is as follows. Signal-transducing molecule. May have a common pathway with IL6ST. The soluble form inhibits the biological activity of LIF by blocking its binding to receptors on target cells. The chain is Leukemia inhibitory factor receptor (LIFR) from Homo sapiens (Human).